Reading from the N-terminus, the 82-residue chain is Small ribosomal subunit protein uS17 (82 aa).

This sequence belongs to the universal ribosomal protein uS17 family. In terms of assembly, part of the 30S ribosomal subunit.

One of the primary rRNA binding proteins, it binds specifically to the 5'-end of 16S ribosomal RNA. The protein is Small ribosomal subunit protein uS17 of Nitrobacter hamburgensis (strain DSM 10229 / NCIMB 13809 / X14).